Here is a 198-residue protein sequence, read N- to C-terminus: IMP cyclohydrolase (198 aa).

This sequence belongs to the archaeal IMP cyclohydrolase family.

It carries out the reaction IMP + H2O = 5-formamido-1-(5-phospho-D-ribosyl)imidazole-4-carboxamide. Its pathway is purine metabolism; IMP biosynthesis via de novo pathway; IMP from 5-formamido-1-(5-phospho-D-ribosyl)imidazole-4-carboxamide: step 1/1. Catalyzes the cyclization of 5-formylamidoimidazole-4-carboxamide ribonucleotide to IMP. In Thermococcus kodakarensis (strain ATCC BAA-918 / JCM 12380 / KOD1) (Pyrococcus kodakaraensis (strain KOD1)), this protein is IMP cyclohydrolase.